The sequence spans 611 residues: DNA mismatch repair protein MutL (611 aa).

The disordered stretch occupies residues 364 to 384 (NVNSKPSKYRPATSPTVPKYT).

Belongs to the DNA mismatch repair MutL/HexB family.

Functionally, this protein is involved in the repair of mismatches in DNA. It is required for dam-dependent methyl-directed DNA mismatch repair. May act as a 'molecular matchmaker', a protein that promotes the formation of a stable complex between two or more DNA-binding proteins in an ATP-dependent manner without itself being part of a final effector complex. This chain is DNA mismatch repair protein MutL, found in Rickettsia bellii (strain OSU 85-389).